The primary structure comprises 1053 residues: DIS3-like exonuclease 1 (1053 aa).

One can recognise a CSD1 domain in the interval 236 to 310; that stretch reads AGIKSGRYIQ…KSEWKGRTAA (75 aa). The segment at 306–332 is disordered; sequence GRTAALGENDSDDKASGESPSEPMPTG. The CSD2 domain maps to 365–431; sequence ILVTPWDYRI…GEIATILVEN (67 aa). An RNB domain is found at 465 to 816; it reads RKDLRTTHLV…VHRLLMAAIS (352 aa). Ser989 carries the post-translational modification Phosphoserine.

The protein belongs to the RNR ribonuclease family. In terms of assembly, component of the RNA exosome complex. The catalytically inactive RNA exosome core (Exo-9) complex is believed to associate with catalytic subunits EXOSC10, and DIS3 or DIS3L in cytoplasmic- and nuclear-specific RNA exosome complex forms. Requires Mg(2+) as cofactor.

It localises to the cytoplasm. The catalysed reaction is Exonucleolytic cleavage in the 3'- to 5'-direction to yield nucleoside 5'-phosphates.. In terms of biological role, catalytic component of the RNA exosome complex which has 3'-&gt;5' exoribonuclease activity and participates in a multitude of cellular RNA processing and degradation events. In the cytoplasm, the RNA exosome complex is involved in general mRNA turnover and specifically degrades inherently unstable mRNAs containing AU-rich elements (AREs) within their 3' untranslated regions, and in RNA surveillance pathways, preventing translation of aberrant mRNAs. It seems to be involved in degradation of histone mRNA. This chain is DIS3-like exonuclease 1 (Dis3l), found in Mus musculus (Mouse).